Here is a 447-residue protein sequence, read N- to C-terminus: UPF0210 protein LAF_0976 (447 aa).

The protein belongs to the UPF0210 family. As to quaternary structure, homodimer.

The sequence is that of UPF0210 protein LAF_0976 from Limosilactobacillus fermentum (strain NBRC 3956 / LMG 18251) (Lactobacillus fermentum).